Reading from the N-terminus, the 329-residue chain is Serpentine receptor class alpha-7 (329 aa).

7 helical membrane passes run 25-45 (YVYL…VKIV), 57-77 (ILLF…LFSA), 104-124 (YLKV…GLLL), 143-163 (VGIA…KIII), 187-207 (RLFA…SVLL), 237-257 (TICF…FGIF), and 273-293 (FIVV…ILLV).

Belongs to the nematode receptor-like protein sra family.

The protein localises to the membrane. The polypeptide is Serpentine receptor class alpha-7 (sra-7) (Caenorhabditis elegans).